A 104-amino-acid polypeptide reads, in one-letter code: Large ribosomal subunit protein bL21 (104 aa).

This sequence belongs to the bacterial ribosomal protein bL21 family. As to quaternary structure, part of the 50S ribosomal subunit. Contacts protein L20.

This protein binds to 23S rRNA in the presence of protein L20. This is Large ribosomal subunit protein bL21 from Streptococcus uberis (strain ATCC BAA-854 / 0140J).